An 85-amino-acid chain; its full sequence is Putative membrane protein insertion efficiency factor (85 aa).

It belongs to the UPF0161 family.

Its subcellular location is the cell membrane. Could be involved in insertion of integral membrane proteins into the membrane. The sequence is that of Putative membrane protein insertion efficiency factor from Leifsonia xyli subsp. xyli (strain CTCB07).